Here is a 333-residue protein sequence, read N- to C-terminus: D-threonate 4-phosphate dehydrogenase (333 aa).

Residues H140 and T141 each coordinate substrate. A divalent metal cation contacts are provided by H170, H214, and H270. 3 residues coordinate substrate: K278, N287, and R296.

The protein belongs to the PdxA family. PdxA2 subfamily. In terms of assembly, homodimer. A divalent metal cation is required as a cofactor.

The catalysed reaction is 4-O-phospho-D-threonate + NAD(+) = dihydroxyacetone phosphate + CO2 + NADH. Its function is as follows. Catalyzes the NAD-dependent oxidation and subsequent decarboxylation of D-threonate 4-phosphate to produce dihydroxyacetone phosphate (DHAP). Can also use 4-hydroxy-L-threonine 4-phosphate as substrate. This chain is D-threonate 4-phosphate dehydrogenase, found in Cupriavidus necator (strain ATCC 17699 / DSM 428 / KCTC 22496 / NCIMB 10442 / H16 / Stanier 337) (Ralstonia eutropha).